The sequence spans 73 residues: Aminopeptidase G (73 aa).

The tract at residues 39 to 73 (GRRAASSSWPGRGSSRRWRPGRRTGAAARGCWRAP) is disordered. Low complexity-rich tracts occupy residues 42–51 (AASSSWPGRG) and 61–73 (RTGA…WRAP).

The protein belongs to the peptidase M1 family. The cofactor is Zn(2+).

It is found in the cytoplasm. Its function is as follows. Hydrolyzes preferentially the N-terminal glycine and can also hydrolyze other amino acids which are used by PepN but is unable to hydrolyze basic amino acids. This chain is Aminopeptidase G (pepG), found in Streptomyces lividans.